Consider the following 791-residue polypeptide: Organellar oligopeptidase A, chloroplastic/mitochondrial (791 aa).

The transit peptide at 1 to 82 directs the protein to the chloroplast and mitochondrion; it reads MLMATPTSRA…SSPPSMSSAA (82 aa). Coiled coils occupy residues 118 to 138 and 239 to 259; these read RPGIRALLQHLEAELEELEKS and DDEKREEFNKIEQELEKLSHK. Residue H571 participates in Zn(2+) binding. E572 is a catalytic residue. H575 and E601 together coordinate Zn(2+). A substrate-binding site is contributed by 703 to 709; it reads HIFAGGY.

The protein belongs to the peptidase M3 family. It depends on Zn(2+) as a cofactor.

It is found in the mitochondrion matrix. The protein localises to the plastid. Its subcellular location is the chloroplast stroma. The catalysed reaction is Hydrolysis of oligopeptides, with broad specificity. Gly or Ala commonly occur as P1 or P1' residues, but more distant residues are also important, as is shown by the fact that Z-Gly-Pro-Gly-|-Gly-Pro-Ala is cleaved, but not Z-(Gly)(5).. With respect to regulation, inhibited by salicylic acid. Oligopeptidase degrading short peptides from 8 to 23 amino acid residues. Plays a role in the degradation of transit peptides and of peptides derived from other proteolytic events. Does not exhibit a strict cleavage pattern. Binds salicylic acid. The chain is Organellar oligopeptidase A, chloroplastic/mitochondrial from Arabidopsis thaliana (Mouse-ear cress).